We begin with the raw amino-acid sequence, 142 residues long: Large ribosomal subunit protein uL11 (142 aa).

The protein belongs to the universal ribosomal protein uL11 family. Part of the ribosomal stalk of the 50S ribosomal subunit. Interacts with L10 and the large rRNA to form the base of the stalk. L10 forms an elongated spine to which L12 dimers bind in a sequential fashion forming a multimeric L10(L12)X complex. One or more lysine residues are methylated.

In terms of biological role, forms part of the ribosomal stalk which helps the ribosome interact with GTP-bound translation factors. This chain is Large ribosomal subunit protein uL11, found in Dictyoglomus turgidum (strain DSM 6724 / Z-1310).